The following is a 572-amino-acid chain: Methionine--tRNA ligase (572 aa).

The 'HIGH' region motif lies at 11-21 (PYINGVKHLGN). Zn(2+) is bound by residues C143, C146, C156, and C159. The 'KMSKS' region signature appears at 341 to 345 (KFSTS). ATP is bound at residue T344.

Belongs to the class-I aminoacyl-tRNA synthetase family. MetG type 1 subfamily. Monomer. The cofactor is Zn(2+).

It is found in the cytoplasm. The catalysed reaction is tRNA(Met) + L-methionine + ATP = L-methionyl-tRNA(Met) + AMP + diphosphate. In terms of biological role, is required not only for elongation of protein synthesis but also for the initiation of all mRNA translation through initiator tRNA(fMet) aminoacylation. In Maricaulis maris (strain MCS10) (Caulobacter maris), this protein is Methionine--tRNA ligase.